Reading from the N-terminus, the 56-residue chain is Protein hunchback (56 aa).

3 C2H2-type zinc fingers span residues 1-5, 11-33, and 39-56; these read HLRNH, FKCD…LKSH, and FRCS…SLKL.

The protein belongs to the hunchback C2H2-type zinc-finger protein family.

The protein localises to the nucleus. Its function is as follows. Gap class segmentation protein that controls development of head structures. The sequence is that of Protein hunchback (hb) from Euscelis plebejus (Leafhopper).